Consider the following 360-residue polypeptide: Codeine O-demethylase (360 aa).

Positions 211-311 (GLQTMRMNYY…RLSIATFHDS (101 aa)) constitute a Fe2OG dioxygenase domain. Tyr-220 provides a ligand contact to 2-oxoglutarate. Residues His-235, Asp-237, and His-292 each coordinate Fe cation. 2-oxoglutarate-binding residues include Arg-302 and Ser-304.

This sequence belongs to the iron/ascorbate-dependent oxidoreductase family. The cofactor is L-ascorbate. Fe cation is required as a cofactor. As to expression, mainly expressed in stems, capsules and leaves and, to a lower extent, in roots.

It catalyses the reaction codeine + 2-oxoglutarate + O2 = morphine + formaldehyde + succinate + CO2. The catalysed reaction is thebaine + 2-oxoglutarate + O2 = oripavine + formaldehyde + succinate + CO2. The enzyme catalyses (S)-scoulerine + 2-oxoglutarate + O2 = (S)-3-O-demethylscoulerine + formaldehyde + succinate + CO2. It carries out the reaction thebaine + 2-oxoglutarate + O2 = neopinone + formaldehyde + succinate + CO2. It catalyses the reaction (S)-reticuline + 2-oxoglutarate + O2 = (S)-6-O-demethylreticuline + formaldehyde + succinate + CO2. The catalysed reaction is (S)-tetrahydropalmatine + S-adenosyl-L-methionine = (S)-cis-N-methyltetrahydropalmatine + S-adenosyl-L-homocysteine. It participates in alkaloid biosynthesis; morphine biosynthesis. Its activity is regulated as follows. Moderate substrate inhibition. Not inhibited in vitro by acylcyclohexanediones. Its function is as follows. Non-heme dioxygenase involved in biosynthesis of morphinan-type benzylisoquinoline and opiate alkaloids natural products. Mediates the conversion of codeine to morphine. Also catalyzes, with lower efficiency, the 3-O-demethylation of thebaine to oripavine and of (S)-scoulerine to 3-O-demethylscoulerine. Supports, with a lower turnover, the conversion of codeinone to morphinone, of thebaine to neopinone, and of neopine to neomorphine. Supports dealkylation reactions such as O,O-demethylenation in the metabolism of protopine, benzo[c]phenanthridine, and rhoeadine alkaloids; cleaves a methylenedioxy bridge leaving two hydroxyl groups. Catalyzes the O,O-demethylenation of methylenedioxy bridges on protopine alkaloids such as allocryptopine, cryptopine and protopine. No activity with (S)-reticuline, salutaridine, papaverine, (S)-corytuberine, oripavine, pavine or noscapine. This Papaver somniferum (Opium poppy) protein is Codeine O-demethylase.